Reading from the N-terminus, the 459-residue chain is UDP-N-acetylmuramoylalanine--D-glutamate ligase (459 aa).

119-125 is a binding site for ATP; it reads GTNGKTT.

The protein belongs to the MurCDEF family.

The protein localises to the cytoplasm. It carries out the reaction UDP-N-acetyl-alpha-D-muramoyl-L-alanine + D-glutamate + ATP = UDP-N-acetyl-alpha-D-muramoyl-L-alanyl-D-glutamate + ADP + phosphate + H(+). The protein operates within cell wall biogenesis; peptidoglycan biosynthesis. Cell wall formation. Catalyzes the addition of glutamate to the nucleotide precursor UDP-N-acetylmuramoyl-L-alanine (UMA). This Lactiplantibacillus plantarum (strain ATCC BAA-793 / NCIMB 8826 / WCFS1) (Lactobacillus plantarum) protein is UDP-N-acetylmuramoylalanine--D-glutamate ligase.